A 433-amino-acid polypeptide reads, in one-letter code: Deoxyguanosinetriphosphate triphosphohydrolase-like protein 2 (433 aa).

One can recognise an HD domain in the interval 61-248 (RLTHSLEVAQ…METADDIAYT (188 aa)).

It belongs to the dGTPase family. Type 2 subfamily.

This chain is Deoxyguanosinetriphosphate triphosphohydrolase-like protein 2, found in Deinococcus radiodurans (strain ATCC 13939 / DSM 20539 / JCM 16871 / CCUG 27074 / LMG 4051 / NBRC 15346 / NCIMB 9279 / VKM B-1422 / R1).